A 155-amino-acid chain; its full sequence is Small ribosomal subunit protein uS7 (155 aa).

Belongs to the universal ribosomal protein uS7 family. As to quaternary structure, part of the 30S ribosomal subunit. Contacts proteins S9 and S11.

Its function is as follows. One of the primary rRNA binding proteins, it binds directly to 16S rRNA where it nucleates assembly of the head domain of the 30S subunit. Is located at the subunit interface close to the decoding center, probably blocks exit of the E-site tRNA. The sequence is that of Small ribosomal subunit protein uS7 from Halorhodospira halophila (strain DSM 244 / SL1) (Ectothiorhodospira halophila (strain DSM 244 / SL1)).